We begin with the raw amino-acid sequence, 194 residues long: Protein GrpE (194 aa).

The tract at residues 1–40 (MSRKHHKEQEEIQEQETISAGAAETPAEETAAIPAATEAD) is disordered. Residues 20 to 38 (AGAAETPAEETAAIPAATE) show a composition bias toward low complexity.

The protein belongs to the GrpE family. Homodimer.

The protein resides in the cytoplasm. Its function is as follows. Participates actively in the response to hyperosmotic and heat shock by preventing the aggregation of stress-denatured proteins, in association with DnaK and GrpE. It is the nucleotide exchange factor for DnaK and may function as a thermosensor. Unfolded proteins bind initially to DnaJ; upon interaction with the DnaJ-bound protein, DnaK hydrolyzes its bound ATP, resulting in the formation of a stable complex. GrpE releases ADP from DnaK; ATP binding to DnaK triggers the release of the substrate protein, thus completing the reaction cycle. Several rounds of ATP-dependent interactions between DnaJ, DnaK and GrpE are required for fully efficient folding. This is Protein GrpE from Chlorobaculum tepidum (strain ATCC 49652 / DSM 12025 / NBRC 103806 / TLS) (Chlorobium tepidum).